The following is a 369-amino-acid chain: UDP-3-O-acylglucosamine N-acyltransferase (369 aa).

His252 (proton acceptor) is an active-site residue. Residues 348–369 (ERRQRGENNAPAQNKQDEEKSS) are disordered.

The protein belongs to the transferase hexapeptide repeat family. LpxD subfamily. As to quaternary structure, homotrimer.

The catalysed reaction is a UDP-3-O-[(3R)-3-hydroxyacyl]-alpha-D-glucosamine + a (3R)-hydroxyacyl-[ACP] = a UDP-2-N,3-O-bis[(3R)-3-hydroxyacyl]-alpha-D-glucosamine + holo-[ACP] + H(+). It functions in the pathway bacterial outer membrane biogenesis; LPS lipid A biosynthesis. Its function is as follows. Catalyzes the N-acylation of UDP-3-O-acylglucosamine using 3-hydroxyacyl-ACP as the acyl donor. Is involved in the biosynthesis of lipid A, a phosphorylated glycolipid that anchors the lipopolysaccharide to the outer membrane of the cell. The polypeptide is UDP-3-O-acylglucosamine N-acyltransferase (Cupriavidus metallidurans (strain ATCC 43123 / DSM 2839 / NBRC 102507 / CH34) (Ralstonia metallidurans)).